A 329-amino-acid polypeptide reads, in one-letter code: Fructose-1,6-bisphosphatase class 1 (329 aa).

Mg(2+)-binding residues include glutamate 84, aspartate 103, leucine 105, and aspartate 106. Residues aspartate 106–serine 109, asparagine 196, and lysine 262 contribute to the substrate site. Residue glutamate 268 participates in Mg(2+) binding.

This sequence belongs to the FBPase class 1 family. Homotetramer. Mg(2+) serves as cofactor.

Its subcellular location is the cytoplasm. The catalysed reaction is beta-D-fructose 1,6-bisphosphate + H2O = beta-D-fructose 6-phosphate + phosphate. The protein operates within carbohydrate biosynthesis; gluconeogenesis. The chain is Fructose-1,6-bisphosphatase class 1 from Shewanella pealeana (strain ATCC 700345 / ANG-SQ1).